Consider the following 26-residue polypeptide: M-poneritoxin-Ng1c (26 aa).

Expressed by the venom gland.

It localises to the secreted. The protein resides in the target cell membrane. Has a broad spectrum of activity against both Gram-positive and Gram-negative bacteria and S.cerevisiae. Has insecticidal and hemolytic activities. May act by disrupting the integrity of the bacterial cell membrane. This chain is M-poneritoxin-Ng1c, found in Neoponera goeldii (Ponerine ant).